A 460-amino-acid polypeptide reads, in one-letter code: Serine--tRNA ligase (460 aa).

The segment covering 50 to 65 has biased composition (basic and acidic residues); sequence DRNEVSSKIGELKQAG. Disordered regions lie at residues 50–71 and 109–129; these read DRNE…DAAQ and PDED…RREG. A compositionally biased stretch (acidic residues) spans 109-121; sequence PDEDAPVGDSEAE. An L-serine-binding site is contributed by 241-243; sequence TAE. ATP-binding positions include 272–274 and Val-288; that span reads RRE. Glu-295 serves as a coordination point for L-serine. 368 to 371 provides a ligand contact to ATP; sequence EVSS. Ser-404 is an L-serine binding site.

Belongs to the class-II aminoacyl-tRNA synthetase family. Type-1 seryl-tRNA synthetase subfamily. As to quaternary structure, homodimer. The tRNA molecule binds across the dimer.

The protein localises to the cytoplasm. The enzyme catalyses tRNA(Ser) + L-serine + ATP = L-seryl-tRNA(Ser) + AMP + diphosphate + H(+). It catalyses the reaction tRNA(Sec) + L-serine + ATP = L-seryl-tRNA(Sec) + AMP + diphosphate + H(+). It participates in aminoacyl-tRNA biosynthesis; selenocysteinyl-tRNA(Sec) biosynthesis; L-seryl-tRNA(Sec) from L-serine and tRNA(Sec): step 1/1. In terms of biological role, catalyzes the attachment of serine to tRNA(Ser). Is also able to aminoacylate tRNA(Sec) with serine, to form the misacylated tRNA L-seryl-tRNA(Sec), which will be further converted into selenocysteinyl-tRNA(Sec). This chain is Serine--tRNA ligase, found in Halobacterium salinarum (strain ATCC 29341 / DSM 671 / R1).